The following is a 414-amino-acid chain: Multifunctional CCA protein (414 aa).

Residues G8 and R11 each contribute to the ATP site. CTP-binding residues include G8 and R11. Mg(2+) is bound by residues E21 and D23. ATP-binding residues include R91, R137, and R140. The CTP site is built by R91, R137, and R140. The 102-residue stretch at 228 to 329 folds into the HD domain; that stretch reads TGIHTMMTVA…LKLFDAIDVW (102 aa).

Belongs to the tRNA nucleotidyltransferase/poly(A) polymerase family. Bacterial CCA-adding enzyme type 1 subfamily. In terms of assembly, monomer. Can also form homodimers and oligomers. It depends on Mg(2+) as a cofactor. Ni(2+) serves as cofactor.

It catalyses the reaction a tRNA precursor + 2 CTP + ATP = a tRNA with a 3' CCA end + 3 diphosphate. The enzyme catalyses a tRNA with a 3' CCA end + 2 CTP + ATP = a tRNA with a 3' CCACCA end + 3 diphosphate. Its function is as follows. Catalyzes the addition and repair of the essential 3'-terminal CCA sequence in tRNAs without using a nucleic acid template. Adds these three nucleotides in the order of C, C, and A to the tRNA nucleotide-73, using CTP and ATP as substrates and producing inorganic pyrophosphate. tRNA 3'-terminal CCA addition is required both for tRNA processing and repair. Also involved in tRNA surveillance by mediating tandem CCA addition to generate a CCACCA at the 3' terminus of unstable tRNAs. While stable tRNAs receive only 3'-terminal CCA, unstable tRNAs are marked with CCACCA and rapidly degraded. The chain is Multifunctional CCA protein from Pectobacterium atrosepticum (strain SCRI 1043 / ATCC BAA-672) (Erwinia carotovora subsp. atroseptica).